Here is a 293-residue protein sequence, read N- to C-terminus: Haloalkane dehalogenase (293 aa).

Residues 34–158 form the AB hydrolase-1 domain; it reads PVLFLHGNPT…FQAFRTADVG (125 aa). D106 (nucleophile) is an active-site residue. The Proton donor role is filled by E130. H272 functions as the Proton acceptor in the catalytic mechanism.

The protein belongs to the haloalkane dehalogenase family. Type 2 subfamily. As to quaternary structure, monomer.

The enzyme catalyses 1-haloalkane + H2O = a halide anion + a primary alcohol + H(+). The protein operates within xenobiotic degradation; haloalkane degradation. It participates in xenobiotic degradation; 1,3-dichloropropene degradation. Functionally, catalyzes hydrolytic cleavage of carbon-halogen bonds in halogenated aliphatic compounds, leading to the formation of the corresponding primary alcohols, halide ions and protons. Has a broad substrate specificity, as it is able to dehalogenate mono- and di- chlorinated and brominated alkanes (up to at least C10), and the two isomers of 1,3-dichloropropene to 3-chloroallyl alcohol; the highest activity was found with 1,2-dibromoethane, while no activity was observed with the analog 1,2-dichloroethane. The sequence is that of Haloalkane dehalogenase (dhaA) from Pseudomonas pavonaceae.